The sequence spans 325 residues: Pyruvate dehydrogenase E1 component subunit beta (325 aa).

Glutamate 60 is a binding site for thiamine diphosphate.

As to quaternary structure, heterodimer of an alpha and a beta chain. Requires thiamine diphosphate as cofactor.

The catalysed reaction is N(6)-[(R)-lipoyl]-L-lysyl-[protein] + pyruvate + H(+) = N(6)-[(R)-S(8)-acetyldihydrolipoyl]-L-lysyl-[protein] + CO2. The pyruvate dehydrogenase complex catalyzes the overall conversion of pyruvate to acetyl-CoA and CO(2). It contains multiple copies of three enzymatic components: pyruvate dehydrogenase (E1), dihydrolipoamide acetyltransferase (E2) and lipoamide dehydrogenase (E3). This is Pyruvate dehydrogenase E1 component subunit beta (pdhB) from Geobacillus stearothermophilus (Bacillus stearothermophilus).